The primary structure comprises 419 residues: MSITITYRIETPGSIEAMADKIASDQSTGTFVPVPGETEELKSRVAARVLGIRQLEDAKRPTWPEVAEGHGPLRRADVDIAFPLDAIGTDLSALMTIAIGGVFSIKGMTGIRIVDMKLPNAFRGAHPGPQFGVAGSKRLTGVEGRPIIGTIVKPALGLRPVETAELVGELINSGVDFIKDDEKLMSPAYSPLKERVAAIMPRILDHEQKTGKKVMYAFGISHADPDEMMRNHDLVLEAGGNCAVVNINSIGFGGMSFLRKRSGLVLHAHRNGWDVLTRDPGAGMDFKVYQQFWRLLGVDQFQINGIRVKYWEPDESFIESFKAVSTPLFDPSDCPLPVAGSGQWGGQAPETYQRTGRTTDLLYLCGGGIVSHPSGPAAGVRAVQQAWEAAVADIPLANYAKDHPELAASIAKFSDGKGA.

Mg(2+) is bound by residues K179, D181, and E182. K179 bears the N6-carboxylysine mark.

The protein belongs to the RuBisCO large chain family. Requires Mg(2+) as cofactor.

It catalyses the reaction 3-oxoisoapionate 4-phosphate + H(+) = L-erythrulose 1-phosphate + CO2. It participates in carbohydrate metabolism. In terms of biological role, involved in catabolism of D-apiose. Catalyzes the decarboxylation of 3-oxo-isoapionate 4-phosphate to L-erythrulose 1-phosphate. This chain is 3-oxo-isoapionate-4-phosphate decarboxylase, found in Rhizobium rhizogenes (strain K84 / ATCC BAA-868) (Agrobacterium radiobacter).